The chain runs to 396 residues: Glycerate kinase (396 aa).

The protein belongs to the glycerate kinase type-2 family.

The protein localises to the cytoplasm. It catalyses the reaction (R)-glycerate + ATP = (2R)-3-phosphoglycerate + ADP + H(+). This chain is Glycerate kinase (GLYCTK), found in Macaca fascicularis (Crab-eating macaque).